The following is a 291-amino-acid chain: MDRKRYELNKELAQMLKGGVIMDVTTPEQAKIAEAAGACAVMALERIPADIRAVGGVSRMSDPKMIKGIMEAVSIPVMAKCRIGHFVEAQILEAVEIDYIDESEVLSPADDVYHIDKTRFKVPFVCGAKDLGEALRRINEGAAMIRTKGEPGTGDIVQAVRHMRMINRQISRLAGMREDELFQEAKELQVPYDLVLYVHEHKRLPVVNFAAGGVATPGDAALMMQLGAEGVFVGSGIFKSGDPEKRAQAIVKAVTNYQDPKVLAELSEDLGEAMVGINEQEIELLMAERGK.

Aspartate 23 lines the D-ribose 5-phosphate pocket. Lysine 80 acts as the Schiff-base intermediate with D-ribose 5-phosphate in catalysis. Glycine 152 is a binding site for D-ribose 5-phosphate. Arginine 164 lines the D-glyceraldehyde 3-phosphate pocket. D-ribose 5-phosphate-binding positions include glycine 213 and 234–235; that span reads GS.

The protein belongs to the PdxS/SNZ family. As to quaternary structure, in the presence of PdxT, forms a dodecamer of heterodimers.

The catalysed reaction is aldehydo-D-ribose 5-phosphate + D-glyceraldehyde 3-phosphate + L-glutamine = pyridoxal 5'-phosphate + L-glutamate + phosphate + 3 H2O + H(+). It participates in cofactor biosynthesis; pyridoxal 5'-phosphate biosynthesis. Catalyzes the formation of pyridoxal 5'-phosphate from ribose 5-phosphate (RBP), glyceraldehyde 3-phosphate (G3P) and ammonia. The ammonia is provided by the PdxT subunit. Can also use ribulose 5-phosphate and dihydroxyacetone phosphate as substrates, resulting from enzyme-catalyzed isomerization of RBP and G3P, respectively. The chain is Pyridoxal 5'-phosphate synthase subunit PdxS from Desulfitobacterium hafniense (strain DSM 10664 / DCB-2).